The sequence spans 332 residues: MVKVVKVYYDDEVSMDILKDKTVAVIGYGNQGEAQAKNMRDSGVHVILGLRPSGSSWKRAEKDGFEVYTIEEAVKRADIVHILIPDLVQPKVYREHIEPYLREGQALGFSHGFNIHYKQIVPPEYVDVIMVAPKSPGKRVREKYLEGFGVPALVAVYQDYTGNAKDLALAMAKAIGCTRAGVIETTFKDETESDLIGEQLVLVGGLIELIKKGFEVLVELGYPPELAYFEACNEAKLIMDLIYERGFTGMLKAVSDTAKYGGLTVGPKVIDDHVKENMKKFAERVRSGEFAKEWISKADKASEVLEELMKPIEEHEIEKVGRFIRKMSGLER.

The KARI N-terminal Rossmann domain occupies 5 to 185; sequence VKVYYDDEVS…GCTRAGVIET (181 aa). Residues 28–31, Arg-51, Ser-56, and 86–89 contribute to the NADP(+) site; these read YGNQ and DLVQ. The active site involves His-111. Residue Gly-137 coordinates NADP(+). The KARI C-terminal knotted domain maps to 186–331; that stretch reads TFKDETESDL…RFIRKMSGLE (146 aa). Mg(2+) contacts are provided by Asp-194, Glu-198, Glu-230, and Glu-234. A substrate-binding site is contributed by Ser-255.

The protein belongs to the ketol-acid reductoisomerase family. It depends on Mg(2+) as a cofactor.

It catalyses the reaction (2R)-2,3-dihydroxy-3-methylbutanoate + NADP(+) = (2S)-2-acetolactate + NADPH + H(+). It carries out the reaction (2R,3R)-2,3-dihydroxy-3-methylpentanoate + NADP(+) = (S)-2-ethyl-2-hydroxy-3-oxobutanoate + NADPH + H(+). It functions in the pathway amino-acid biosynthesis; L-isoleucine biosynthesis; L-isoleucine from 2-oxobutanoate: step 2/4. Its pathway is amino-acid biosynthesis; L-valine biosynthesis; L-valine from pyruvate: step 2/4. Functionally, involved in the biosynthesis of branched-chain amino acids (BCAA). Catalyzes an alkyl-migration followed by a ketol-acid reduction of (S)-2-acetolactate (S2AL) to yield (R)-2,3-dihydroxy-isovalerate. In the isomerase reaction, S2AL is rearranged via a Mg-dependent methyl migration to produce 3-hydroxy-3-methyl-2-ketobutyrate (HMKB). In the reductase reaction, this 2-ketoacid undergoes a metal-dependent reduction by NADPH to yield (R)-2,3-dihydroxy-isovalerate. In Pyrococcus abyssi (strain GE5 / Orsay), this protein is Ketol-acid reductoisomerase (NADP(+)).